The sequence spans 582 residues: Cryptochrome-2 (582 aa).

Residues 12 to 141 (CRSVHWFRRG…EVVIENSHTL (130 aa)) form the Photolyase/cryptochrome alpha/beta domain. Residues serine 261, glutamine 298, histidine 364, and 396-398 (DAD) each bind FAD. The tract at residues 521-559 (GPVTDSAPGQGSSTSTAVRLPQSDQASPKRKHEGAEELC) is disordered. A compositionally biased stretch (polar residues) spans 527–546 (APGQGSSTSTAVRLPQSDQA).

Belongs to the DNA photolyase class-1 family. In terms of assembly, component of the circadian core oscillator, which includes the CRY proteins, CLOCK or NPAS2, BMAL1 or BMAL2, CSNK1E, and the PER proteins. The cofactor is FAD. (6R)-5,10-methylene-5,6,7,8-tetrahydrofolate serves as cofactor. Expressed in the pineal gland.

It is found in the cytoplasm. It localises to the nucleus. Functionally, transcriptional repressor which forms a core component of the circadian clock. The circadian clock, an internal time-keeping system, regulates various physiological processes through the generation of approximately 24 hour circadian rhythms in gene expression, which are translated into rhythms in metabolism and behavior. It is derived from the Latin roots 'circa' (about) and 'diem' (day) and acts as an important regulator of a wide array of physiological functions including metabolism, sleep, body temperature, blood pressure, endocrine, immune, cardiovascular, and renal function. Consists of two major components: the central clock, residing in the suprachiasmatic nucleus (SCN) of the brain, and the peripheral clocks that are present in nearly every tissue and organ system. Both the central and peripheral clocks can be reset by environmental cues, also known as Zeitgebers (German for 'timegivers'). The predominant Zeitgeber for the central clock is light, which is sensed by retina and signals directly to the SCN. The central clock entrains the peripheral clocks through neuronal and hormonal signals, body temperature and feeding-related cues, aligning all clocks with the external light/dark cycle. Circadian rhythms allow an organism to achieve temporal homeostasis with its environment at the molecular level by regulating gene expression to create a peak of protein expression once every 24 hours to control when a particular physiological process is most active with respect to the solar day. Transcription and translation of core clock components (CLOCK, NPAS2, BMAL1, BMAL2, PER1, PER2, PER3, CRY1 and CRY2) plays a critical role in rhythm generation, whereas delays imposed by post-translational modifications (PTMs) are important for determining the period (tau) of the rhythms (tau refers to the period of a rhythm and is the length, in time, of one complete cycle). A diurnal rhythm is synchronized with the day/night cycle, while the ultradian and infradian rhythms have a period shorter and longer than 24 hours, respectively. Disruptions in the circadian rhythms contribute to the pathology of cardiovascular diseases, cancer, metabolic syndromes and aging. A transcription/translation feedback loop (TTFL) forms the core of the molecular circadian clock mechanism. Transcription factors, CLOCK or NPAS2 and BMAL1 or BMAL2, form the positive limb of the feedback loop, act in the form of a heterodimer and activate the transcription of core clock genes and clock-controlled genes (involved in key metabolic processes), harboring E-box elements (5'-CACGTG-3') within their promoters. The core clock genes: PER1/2/3 and CRY1/2 which are transcriptional repressors form the negative limb of the feedback loop and interact with the CLOCK|NPAS2-BMAL1|BMAL2 heterodimer inhibiting its activity and thereby negatively regulating their own expression. This heterodimer also activates nuclear receptors NR1D1/2, RORA/B/G, which form a second feedback loop and which activate and repress BMAL1 transcription, respectively. CRY1 and CRY2 have redundant functions but also differential and selective contributions at least in defining the pace of the SCN circadian clock and its circadian transcriptional outputs. Less potent transcriptional repressor in cerebellum and liver than CRY1, though less effective in lengthening the period of the SCN oscillator. Seems to play a critical role in tuning SCN circadian period by opposing the action of CRY1. With CRY1, dispensable for circadian rhythm generation but necessary for the development of intercellular networks for rhythm synchrony. Represses CLOCK-BMAL1-mediated transcriptional activation. This chain is Cryptochrome-2 (CRY2), found in Gallus gallus (Chicken).